The primary structure comprises 452 residues: GTPase Der (452 aa).

2 EngA-type G domains span residues Pro4–Asp169 and Ile177–Arg352. Residues Gly10 to Ser17, Asp57 to Leu61, Asn120 to Glu123, Gly183 to Ser190, Asp230 to Ile234, and Asn295 to Asp298 each bind GTP. The 86-residue stretch at Arg353–Lys438 folds into the KH-like domain.

It belongs to the TRAFAC class TrmE-Era-EngA-EngB-Septin-like GTPase superfamily. EngA (Der) GTPase family. In terms of assembly, associates with the 50S ribosomal subunit.

GTPase that plays an essential role in the late steps of ribosome biogenesis. In Crocosphaera subtropica (strain ATCC 51142 / BH68) (Cyanothece sp. (strain ATCC 51142)), this protein is GTPase Der.